A 283-amino-acid chain; its full sequence is Probable voltage-dependent anion-selective channel (283 aa).

This sequence belongs to the eukaryotic mitochondrial porin family.

It is found in the mitochondrion outer membrane. Forms a channel through the cell membrane that allows diffusion of small hydrophilic molecules. Plays a role in maintaining mitochondrial morphology. The sequence is that of Probable voltage-dependent anion-selective channel from Caenorhabditis elegans.